A 486-amino-acid chain; its full sequence is Zinc finger CCCH domain-containing protein 49 (486 aa).

The C3H1-type zinc-finger motif lies at 157–184; that stretch reads RNRAHVCSFYVRGECTRGAECPYRHEMP. The RRM domain maps to 228 to 301; sequence RTLYIGGLDS…VRLKLMWGKP (74 aa). Disordered regions lie at residues 329 to 348 and 379 to 486; these read SQQQ…QQQP and LVES…NGMT. Composition is skewed to low complexity over residues 389 to 407 and 415 to 430; these read PGPQ…GQSY and YHGG…YGGY. Pro residues predominate over residues 431–444; that stretch reads MPPPRMPYQQPPQY. Residues 445–486 are compositionally biased toward low complexity; it reads PAYQPMLAPPAQSQASSLQQPAPATQQLGQGPQQQTTQNGMT.

The chain is Zinc finger CCCH domain-containing protein 49 from Oryza sativa subsp. japonica (Rice).